The sequence spans 287 residues: Small ribosomal subunit biogenesis GTPase RsgA (287 aa).

Residues 61–218 enclose the CP-type G domain; sequence ISQLKRPAVA…MVDTPGFSSL (158 aa). GTP is bound by residues 110–113 and 161–169; these read NKLD and GPSGVGKST. Zn(2+) contacts are provided by Cys-242, Cys-247, His-249, and Cys-255.

It belongs to the TRAFAC class YlqF/YawG GTPase family. RsgA subfamily. As to quaternary structure, monomer. Associates with 30S ribosomal subunit, binds 16S rRNA. Requires Zn(2+) as cofactor.

The protein localises to the cytoplasm. In terms of biological role, one of several proteins that assist in the late maturation steps of the functional core of the 30S ribosomal subunit. Helps release RbfA from mature subunits. May play a role in the assembly of ribosomal proteins into the subunit. Circularly permuted GTPase that catalyzes slow GTP hydrolysis, GTPase activity is stimulated by the 30S ribosomal subunit. This Clostridium kluyveri (strain NBRC 12016) protein is Small ribosomal subunit biogenesis GTPase RsgA.